The primary structure comprises 230 residues: UPF0758 protein Glov_0523 (230 aa).

The MPN domain maps to 108-230 (RFTSPAQVFD…YFSFVESGLL (123 aa)). Zn(2+) contacts are provided by His-179, His-181, and Asp-192. A JAMM motif motif is present at residues 179–192 (HNHPSGDPAPSRED).

This sequence belongs to the UPF0758 family.

In Trichlorobacter lovleyi (strain ATCC BAA-1151 / DSM 17278 / SZ) (Geobacter lovleyi), this protein is UPF0758 protein Glov_0523.